The following is a 442-amino-acid chain: Trigger factor (442 aa).

In terms of domain architecture, PPIase FKBP-type spans 165-250 (DDRVIIDFEG…LQKVMAPELP (86 aa)).

Belongs to the FKBP-type PPIase family. Tig subfamily.

Its subcellular location is the cytoplasm. The enzyme catalyses [protein]-peptidylproline (omega=180) = [protein]-peptidylproline (omega=0). Its function is as follows. Involved in protein export. Acts as a chaperone by maintaining the newly synthesized protein in an open conformation. Functions as a peptidyl-prolyl cis-trans isomerase. The sequence is that of Trigger factor from Coxiella burnetii (strain RSA 493 / Nine Mile phase I).